The chain runs to 344 residues: Glyceraldehyde-3-phosphate dehydrogenase (344 aa).

NAD(+) contacts are provided by residues 11 to 12 (TI) and glycine 110. D-glyceraldehyde 3-phosphate is bound at residue 139-141 (SCN). Catalysis depends on cysteine 140, which acts as the Nucleophile. Arginine 169 lines the NAD(+) pocket. D-glyceraldehyde 3-phosphate is bound at residue 195–196 (HG). Glutamine 302 provides a ligand contact to NAD(+).

It belongs to the glyceraldehyde-3-phosphate dehydrogenase family. In terms of assembly, homotetramer.

The protein resides in the cytoplasm. It catalyses the reaction D-glyceraldehyde 3-phosphate + phosphate + NADP(+) = (2R)-3-phospho-glyceroyl phosphate + NADPH + H(+). It carries out the reaction D-glyceraldehyde 3-phosphate + phosphate + NAD(+) = (2R)-3-phospho-glyceroyl phosphate + NADH + H(+). It participates in carbohydrate degradation; glycolysis; pyruvate from D-glyceraldehyde 3-phosphate: step 1/5. The sequence is that of Glyceraldehyde-3-phosphate dehydrogenase from Pyrobaculum neutrophilum (strain DSM 2338 / JCM 9278 / NBRC 100436 / V24Sta) (Thermoproteus neutrophilus).